We begin with the raw amino-acid sequence, 424 residues long: S-phase kinase-associated protein 2 (424 aa).

Residues 52–73 (PHGLLSNLGHPQSPPRKRVKGK) are disordered. Ser64 bears the Phosphoserine mark. A Nuclear localization signal motif is present at residues 67–73 (RKRVKGK). Lys68 and Lys71 each carry N6-acetyllysine; by p300/EP300. Ser75 is modified (phosphoserine). Residues 94–140 (GVSWDSLPDELLLGIFSCLCLPELLRVSGVCKRWYRLSLDESLWQSL) form the F-box domain. LRR repeat units lie at residues 151–176 (VTVR…PLGE), 177–204 (SFSS…ILSE), 210–234 (NLSL…NLVR), 235–257 (LNLC…SCSR), 258–284 (LDEL…LPNT), 286–308 (TQLN…IIKR), 309–330 (CPNL…CFPE), 334–356 (LNYL…LLEL), 359–378 (IPTL…TLQL), and 380–401 (REAL…RPTM). The residue at position 179 (Ser179) is a Phosphoserine.

In terms of assembly, part of a SCF(SKP2) complex consisting of CUL1, RBX1, SKP1 and SKP2. Component of a SCF(SKP2)-like complex containing CUL1, SKP1, TRIM21 and SKP2. Interacts directly with CUL1 and SKP1. Interacts with ASB2 which is the substrate-recognition component of a probable ECS E3 ubiquitin-protein ligase complex; ASB2 is likely to bridge the formation of dimeric E3-ubiquitin-protein ligase complexes composed of an ECS complex and an SCF(SKP2) complex. Interacts with CKS1. Interacts with the cyclin-A-CDK2 complex. Interacts with ORC1, phosphorylated CDT1, phosphorylated RBL2, ELF4, phosphorylated RAG2, FOXO1, UBP43, MYC, TOB1, TAL1 and KMT2A/MLL1. Interacts with TRIM21. Interacts with cyclin-E. Interacts with CARM1. In terms of processing, phosphorylated on serine and threonine resudues in response to DNA damage, promoting 'Lys-63'-linked ubiquitination of NBN. Post-translationally, ubiquitinated by the APC/C complex, leading to its degradation by the proteasome. Deubiquitinated by USP13. Acetylation at Lys-68 and Lys-71 increases stability through impairment of APC/C-mediated proteolysis and promotes cytoplasmic retention. Deacetylated by SIRT3.

It localises to the cytoplasm. The protein resides in the nucleus. Its pathway is protein modification; protein ubiquitination. In terms of biological role, substrate recognition component of a SCF (SKP1-CUL1-F-box protein) E3 ubiquitin-protein ligase complex which mediates the ubiquitination and subsequent proteasomal degradation of target proteins involved in cell cycle progression, signal transduction and transcription. Specifically recognizes phosphorylated CDKN1B/p27kip and is involved in regulation of G1/S transition. Degradation of CDKN1B/p27kip also requires CKS1. Recognizes target proteins ORC1, CDT1, RBL2, KMT2A/MLL1, CDK9, RAG2, NBN, FOXO1, UBP43, YTHDF2, and probably MYC, TOB1 and TAL1. Degradation of TAL1 also requires STUB1. Recognizes CDKN1A in association with CCNE1 or CCNE2 and CDK2. Promotes ubiquitination and destruction of CDH1 in a CK1-dependent manner, thereby regulating cell migration. Following phosphorylation in response to DNA damage, mediates 'Lys-63'-linked ubiquitination of NBN, promoting ATM recruitment to DNA damage sites and DNA repair via homologous recombination. Its function is as follows. Through the ubiquitin-mediated proteasomal degradation of viral proteins may have an antiviral activity. The sequence is that of S-phase kinase-associated protein 2 (Skp2) from Mus musculus (Mouse).